The sequence spans 140 residues: 3-hydroxyacyl-[acyl-carrier-protein] dehydratase FabZ (140 aa).

The active site involves His-48.

This sequence belongs to the thioester dehydratase family. FabZ subfamily.

It localises to the cytoplasm. It carries out the reaction a (3R)-hydroxyacyl-[ACP] = a (2E)-enoyl-[ACP] + H2O. Functionally, involved in unsaturated fatty acids biosynthesis. Catalyzes the dehydration of short chain beta-hydroxyacyl-ACPs and long chain saturated and unsaturated beta-hydroxyacyl-ACPs. This Oceanobacillus iheyensis (strain DSM 14371 / CIP 107618 / JCM 11309 / KCTC 3954 / HTE831) protein is 3-hydroxyacyl-[acyl-carrier-protein] dehydratase FabZ.